The following is a 351-amino-acid chain: 3-ketosteroid-9-alpha-monooxygenase, ferredoxin reductase component (351 aa).

One can recognise an FAD-binding FR-type domain in the interval 10 to 116 (SRSVILTVSA…LPPAGVFTPK (107 aa)). Residues 264–351 (ATVEVELDGE…PVTDHLKIEF (88 aa)) form the 2Fe-2S ferredoxin-type domain. Residues Cys-300, Cys-305, Cys-308, and Cys-338 each coordinate [2Fe-2S] cluster.

The two-component system 3-ketosteroid-9-alpha-monooxygenase is composed of an oxygenase component KshA and a reductase component KshB. It depends on FAD as a cofactor. [2Fe-2S] cluster serves as cofactor.

The enzyme catalyses androsta-1,4-diene-3,17-dione + 2 reduced [2Fe-2S]-[ferredoxin] + O2 + 2 H(+) = 9alpha-hydroxyandrosta-1,4-diene-3,17-dione + 2 oxidized [2Fe-2S]-[ferredoxin] + H2O. The protein operates within steroid metabolism; cholesterol degradation. Its activity is regulated as follows. KSH activity is completely inhibited by zinc ions. KshB is specifically inhibited by Cu(2+) ions. Functionally, probably involved in the degradation of cholesterol. In vitro, catalyzes the introduction of a 9alpha-hydroxyl moiety into the ring B of 3-ketosteroid substrates such as 1,4-androstadiene-3,17-dione (ADD), 4-androstene-3,17-dione (AD), 4-androstene-17beta-ol-3-one (testosterone), 4-pregnene-3,20-dione (progesterone), 19-nor-4-androstene-3,17-dione (nordion), 1-(5alpha)-androstene-3,17-dione, 5alpha-androstane-3,17-dione and 5beta-androstane-3,17-dione. KSH has the highest activity with 3-keto-Delta4 steroid substrates. The sequence is that of 3-ketosteroid-9-alpha-monooxygenase, ferredoxin reductase component from Rhodococcus rhodochrous.